The primary structure comprises 386 residues: Succinate--CoA ligase [ADP-forming] subunit beta (386 aa).

In terms of domain architecture, ATP-grasp spans 9 to 244; sequence KEILRKYGVP…HDEEDPLETR (236 aa). ATP contacts are provided by residues lysine 46, 53-55, glutamate 99, cysteine 102, and glutamate 107; that span reads GRG. Residues asparagine 199 and aspartate 213 each coordinate Mg(2+). Substrate is bound by residues asparagine 264 and 321-323; that span reads GIM.

Belongs to the succinate/malate CoA ligase beta subunit family. As to quaternary structure, heterotetramer of two alpha and two beta subunits. The cofactor is Mg(2+).

It carries out the reaction succinate + ATP + CoA = succinyl-CoA + ADP + phosphate. It catalyses the reaction GTP + succinate + CoA = succinyl-CoA + GDP + phosphate. It functions in the pathway carbohydrate metabolism; tricarboxylic acid cycle; succinate from succinyl-CoA (ligase route): step 1/1. Functionally, succinyl-CoA synthetase functions in the citric acid cycle (TCA), coupling the hydrolysis of succinyl-CoA to the synthesis of either ATP or GTP and thus represents the only step of substrate-level phosphorylation in the TCA. The beta subunit provides nucleotide specificity of the enzyme and binds the substrate succinate, while the binding sites for coenzyme A and phosphate are found in the alpha subunit. This chain is Succinate--CoA ligase [ADP-forming] subunit beta, found in Rickettsia conorii (strain ATCC VR-613 / Malish 7).